Reading from the N-terminus, the 609-residue chain is Glutamine--fructose-6-phosphate aminotransferase [isomerizing] (609 aa).

The active-site Nucleophile; for GATase activity is the Cys-2. Positions 2–219 constitute a Glutamine amidotransferase type-2 domain; that stretch reads CGIVGYIGGR…DGECARLTRD (218 aa). 2 SIS domains span residues 285–424 and 458–599; these read SSDL…LRGT and LARE…VDQP. The active-site For Fru-6P isomerization activity is Lys-604.

Homodimer.

It is found in the cytoplasm. It catalyses the reaction D-fructose 6-phosphate + L-glutamine = D-glucosamine 6-phosphate + L-glutamate. Catalyzes the first step in hexosamine metabolism, converting fructose-6P into glucosamine-6P using glutamine as a nitrogen source. In Gloeobacter violaceus (strain ATCC 29082 / PCC 7421), this protein is Glutamine--fructose-6-phosphate aminotransferase [isomerizing].